Reading from the N-terminus, the 396-residue chain is 8-amino-7-oxononanoate synthase (396 aa).

Arg29 is a substrate binding site. 116-117 (GY) is a binding site for pyridoxal 5'-phosphate. Substrate is bound at residue His141. Residues Ser187, His215, and Thr243 each coordinate pyridoxal 5'-phosphate. Lys246 bears the N6-(pyridoxal phosphate)lysine mark. Substrate is bound at residue Thr360.

The protein belongs to the class-II pyridoxal-phosphate-dependent aminotransferase family. BioF subfamily. Homodimer. Pyridoxal 5'-phosphate is required as a cofactor.

It carries out the reaction 6-carboxyhexanoyl-[ACP] + L-alanine + H(+) = (8S)-8-amino-7-oxononanoate + holo-[ACP] + CO2. It functions in the pathway cofactor biosynthesis; biotin biosynthesis. Functionally, catalyzes the decarboxylative condensation of pimeloyl-[acyl-carrier protein] and L-alanine to produce 8-amino-7-oxononanoate (AON), [acyl-carrier protein], and carbon dioxide. The protein is 8-amino-7-oxononanoate synthase of Nitrosospira multiformis (strain ATCC 25196 / NCIMB 11849 / C 71).